The primary structure comprises 609 residues: Glutamine--fructose-6-phosphate aminotransferase [isomerizing] (609 aa).

The active-site Nucleophile; for GATase activity is the Cys-2. The Glutamine amidotransferase type-2 domain occupies 2-219 (CGIFGYLGSK…SGELAIVGLG (218 aa)). SIS domains are found at residues 280–426 (ISEK…SKHT) and 458–599 (WAHT…IDCP). Lys-604 acts as the For Fru-6P isomerization activity in catalysis.

Homodimer.

It is found in the cytoplasm. The catalysed reaction is D-fructose 6-phosphate + L-glutamine = D-glucosamine 6-phosphate + L-glutamate. Functionally, catalyzes the first step in hexosamine metabolism, converting fructose-6P into glucosamine-6P using glutamine as a nitrogen source. The protein is Glutamine--fructose-6-phosphate aminotransferase [isomerizing] of Chlamydia abortus (strain DSM 27085 / S26/3) (Chlamydophila abortus).